Here is a 283-residue protein sequence, read N- to C-terminus: Glutamate racemase (283 aa).

Residues Asp7–Ser8 and Tyr39–Gly40 each bind substrate. The active-site Proton donor/acceptor is the Cys70. Asn71–Thr72 is a binding site for substrate. Residue Cys206 is the Proton donor/acceptor of the active site. Thr207–His208 provides a ligand contact to substrate.

It belongs to the aspartate/glutamate racemases family.

The catalysed reaction is L-glutamate = D-glutamate. Its pathway is cell wall biogenesis; peptidoglycan biosynthesis. Functionally, provides the (R)-glutamate required for cell wall biosynthesis. This is Glutamate racemase from Caulobacter sp. (strain K31).